Here is a 327-residue protein sequence, read N- to C-terminus: Inactive peptidyl-prolyl cis-trans isomerase FKBP6 (327 aa).

The 90-residue stretch at 54 to 143 (DASVLVKYSG…LFEIELLDFL (90 aa)) folds into the PPIase FKBP-type domain. TPR repeat units follow at residues 171–204 (AATEREFGNYLFRQNRFYDAKVRYKRALLLLRRR), 219–252 (LPVLLNLSFTYLKLDRPTIALCYGEQALIIDQKN), and 253–286 (AKALFRCGQACLLLTEYQKARDFLVRAQKEQPFN).

The protein belongs to the FKBP6 family. As to quaternary structure, interacts (via TPR repeats) with HSP90. Interacts with HSP72/HSPA2 and CLTC. Interacts with GAPDH; leading to inhibit GAPDH catalytic activity. Detected in all tissues examined, with higher expression in testis, heart, skeletal muscle, liver, and kidney.

The protein resides in the cytoplasm. It localises to the nucleus. Has an essential role in spermatogenesis. It is required to repress transposable elements and prevent their mobilization, which is essential for the germline integrity. Acts via the piRNA metabolic process, which mediates the repression of transposable elements during meiosis by forming complexes composed of piRNAs and Piwi proteins and govern the methylation and subsequent repression of transposons. Acts as a co-chaperone via its interaction with HSP90 and is required for the piRNA amplification process, the secondary piRNA biogenesis. May be required together with HSP90 in removal of 16 nucleotide ping-pong by-products from Piwi complexes, possibly facilitating turnover of Piwi complexes. The chain is Inactive peptidyl-prolyl cis-trans isomerase FKBP6 (FKBP6) from Homo sapiens (Human).